Reading from the N-terminus, the 506-residue chain is Anaerobic nitric oxide reductase transcription regulator NorR (506 aa).

Asp-57 is modified (4-aspartylphosphate). The Sigma-54 factor interaction domain maps to 187–416 (MIGLSPNMMQ…LEHAIHRAVV (230 aa)). ATP is bound by residues 215–222 (GETGTGKE) and 278–287 (ADNGTLFLDE). The H-T-H motif DNA-binding region spans 481-500 (WAACARALETDVANLHRLAK).

It functions in the pathway nitrogen metabolism; nitric oxide reduction. In terms of biological role, required for the expression of anaerobic nitric oxide (NO) reductase, acts as a transcriptional activator for at least the norVW operon. Activation also requires sigma-54. The chain is Anaerobic nitric oxide reductase transcription regulator NorR from Citrobacter koseri (strain ATCC BAA-895 / CDC 4225-83 / SGSC4696).